Consider the following 89-residue polypeptide: Envelope protein US9 (89 aa).

Residues Met1–Ser10 are compositionally biased toward basic and acidic residues. A disordered region spans residues Met1–Pro21. The Intravirion portion of the chain corresponds to Met1–Leu66. The short motif at Tyr20–Ala23 is the Internalization motif element. The acidic stretch occupies residues Glu29–Glu38. 2 positions are modified to phosphoserine; by host CK2: Ser33 and Ser35. A helical; Signal-anchor for type II membrane protein transmembrane segment spans residues Val67–Leu87. Topologically, residues Leu88–Arg89 are virion surface.

It belongs to the alphaherpesvirinae envelope protein US9 family. Post-translationally, phosphorylated on serines within the acidic cluster, possibly by host CK2. Phosphorylation determines whether endocytosed viral US9 traffics to the trans-Golgi network or recycles to the cell membrane.

Its subcellular location is the virion membrane. It localises to the host Golgi apparatus membrane. The protein localises to the host smooth endoplasmic reticulum membrane. The protein resides in the host cell membrane. In terms of biological role, essential for the anterograde spread of the infection throughout the host nervous system. Together with the gE/gI heterodimer, US9 is involved in the sorting and transport of viral structural components toward axon tips. The protein is Envelope protein US9 of Homo sapiens (Human).